The sequence spans 94 residues: MAELPQSRINERNITSEMRESFLDYAMSVIVSRALPDVRDGLKPVHRRILYGLNEQGMTPDKPYKKSARIVGDVMGKYHPHGDSSIYEAMVRMA.

Positions 35–94 constitute a Topo IIA-type catalytic domain; the sequence is LPDVRDGLKPVHRRILYGLNEQGMTPDKPYKKSARIVGDVMGKYHPHGDSSIYEAMVRMA.

The protein belongs to the type II topoisomerase GyrA/ParC subunit family. As to quaternary structure, heterotetramer, composed of two GyrA and two GyrB chains. In the heterotetramer, GyrA contains the active site tyrosine that forms a transient covalent intermediate with DNA, while GyrB binds cofactors and catalyzes ATP hydrolysis.

The protein localises to the cytoplasm. It catalyses the reaction ATP-dependent breakage, passage and rejoining of double-stranded DNA.. Functionally, a type II topoisomerase that negatively supercoils closed circular double-stranded (ds) DNA in an ATP-dependent manner to modulate DNA topology and maintain chromosomes in an underwound state. Negative supercoiling favors strand separation, and DNA replication, transcription, recombination and repair, all of which involve strand separation. Also able to catalyze the interconversion of other topological isomers of dsDNA rings, including catenanes and knotted rings. Type II topoisomerases break and join 2 DNA strands simultaneously in an ATP-dependent manner. The polypeptide is DNA gyrase subunit A (Staphylococcus epidermidis).